We begin with the raw amino-acid sequence, 140 residues long: Nucleoside diphosphate kinase (140 aa).

Residues lysine 10, phenylalanine 58, arginine 86, threonine 92, arginine 103, and asparagine 113 each contribute to the ATP site. Histidine 116 (pros-phosphohistidine intermediate) is an active-site residue.

Belongs to the NDK family. Homotetramer. The cofactor is Mg(2+).

It localises to the cytoplasm. It catalyses the reaction a 2'-deoxyribonucleoside 5'-diphosphate + ATP = a 2'-deoxyribonucleoside 5'-triphosphate + ADP. The enzyme catalyses a ribonucleoside 5'-diphosphate + ATP = a ribonucleoside 5'-triphosphate + ADP. In terms of biological role, major role in the synthesis of nucleoside triphosphates other than ATP. The ATP gamma phosphate is transferred to the NDP beta phosphate via a ping-pong mechanism, using a phosphorylated active-site intermediate. The protein is Nucleoside diphosphate kinase of Anaplasma phagocytophilum (strain HZ).